Consider the following 347-residue polypeptide: Holliday junction branch migration complex subunit RuvB (347 aa).

The tract at residues 1–186 (MKDENSISFL…FGITARFELY (186 aa)) is large ATPase domain (RuvB-L). ATP-binding positions include Leu-25, Arg-26, Gly-67, Lys-70, Thr-71, Thr-72, 133–135 (EDY), Arg-176, Tyr-186, and Arg-223. Thr-71 is a Mg(2+) binding site. The small ATPAse domain (RuvB-S) stretch occupies residues 187-257 (SEIELVEIIK…IVSIGLEMLR (71 aa)). Positions 260 to 347 (GEGLDEQDRN…GLNENQRVSF (88 aa)) are head domain (RuvB-H). Residues Arg-315 and Arg-320 each coordinate DNA.

Belongs to the RuvB family. In terms of assembly, homohexamer. Forms an RuvA(8)-RuvB(12)-Holliday junction (HJ) complex. HJ DNA is sandwiched between 2 RuvA tetramers; dsDNA enters through RuvA and exits via RuvB. An RuvB hexamer assembles on each DNA strand where it exits the tetramer. Each RuvB hexamer is contacted by two RuvA subunits (via domain III) on 2 adjacent RuvB subunits; this complex drives branch migration. In the full resolvosome a probable DNA-RuvA(4)-RuvB(12)-RuvC(2) complex forms which resolves the HJ.

It is found in the cytoplasm. It carries out the reaction ATP + H2O = ADP + phosphate + H(+). The RuvA-RuvB-RuvC complex processes Holliday junction (HJ) DNA during genetic recombination and DNA repair, while the RuvA-RuvB complex plays an important role in the rescue of blocked DNA replication forks via replication fork reversal (RFR). RuvA specifically binds to HJ cruciform DNA, conferring on it an open structure. The RuvB hexamer acts as an ATP-dependent pump, pulling dsDNA into and through the RuvAB complex. RuvB forms 2 homohexamers on either side of HJ DNA bound by 1 or 2 RuvA tetramers; 4 subunits per hexamer contact DNA at a time. Coordinated motions by a converter formed by DNA-disengaged RuvB subunits stimulates ATP hydrolysis and nucleotide exchange. Immobilization of the converter enables RuvB to convert the ATP-contained energy into a lever motion, pulling 2 nucleotides of DNA out of the RuvA tetramer per ATP hydrolyzed, thus driving DNA branch migration. The RuvB motors rotate together with the DNA substrate, which together with the progressing nucleotide cycle form the mechanistic basis for DNA recombination by continuous HJ branch migration. Branch migration allows RuvC to scan DNA until it finds its consensus sequence, where it cleaves and resolves cruciform DNA. This chain is Holliday junction branch migration complex subunit RuvB, found in Borreliella burgdorferi (strain ATCC 35210 / DSM 4680 / CIP 102532 / B31) (Borrelia burgdorferi).